Here is a 100-residue protein sequence, read N- to C-terminus: Small ribosomal subunit protein uS14c (100 aa).

This sequence belongs to the universal ribosomal protein uS14 family. In terms of assembly, part of the 30S ribosomal subunit.

The protein resides in the plastid. The protein localises to the chloroplast. In terms of biological role, binds 16S rRNA, required for the assembly of 30S particles. The polypeptide is Small ribosomal subunit protein uS14c (Chlorokybus atmophyticus (Soil alga)).